Consider the following 84-residue polypeptide: U21-theraphotoxin-Cg1a 2 (84 aa).

The signal sequence occupies residues 1 to 21; sequence MKVSVLITLAVLGVMFLFTSA. Positions 22–47 are excised as a propeptide; the sequence is EERGSDQMDSPAWLKSMEIIFQSEER. Disulfide bonds link Cys-49–Cys-63, Cys-56–Cys-68, and Cys-62–Cys-76. Position 82 is a valine amide (Val-82).

This sequence belongs to the neurotoxin 10 (Hwtx-1) family. 05 (F4a) subfamily. As to expression, expressed by the venom gland.

The protein resides in the secreted. Functionally, probable ion channel inhibitor. In Chilobrachys guangxiensis (Chinese earth tiger tarantula), this protein is U21-theraphotoxin-Cg1a 2.